The sequence spans 145 residues: D-aminoacyl-tRNA deacylase (145 aa).

A Gly-cisPro motif, important for rejection of L-amino acids motif is present at residues G137–P138.

The protein belongs to the DTD family. As to quaternary structure, homodimer.

The protein resides in the cytoplasm. The catalysed reaction is glycyl-tRNA(Ala) + H2O = tRNA(Ala) + glycine + H(+). It carries out the reaction a D-aminoacyl-tRNA + H2O = a tRNA + a D-alpha-amino acid + H(+). Functionally, an aminoacyl-tRNA editing enzyme that deacylates mischarged D-aminoacyl-tRNAs. Also deacylates mischarged glycyl-tRNA(Ala), protecting cells against glycine mischarging by AlaRS. Acts via tRNA-based rather than protein-based catalysis; rejects L-amino acids rather than detecting D-amino acids in the active site. By recycling D-aminoacyl-tRNA to D-amino acids and free tRNA molecules, this enzyme counteracts the toxicity associated with the formation of D-aminoacyl-tRNA entities in vivo and helps enforce protein L-homochirality. The sequence is that of D-aminoacyl-tRNA deacylase from Erwinia tasmaniensis (strain DSM 17950 / CFBP 7177 / CIP 109463 / NCPPB 4357 / Et1/99).